The chain runs to 426 residues: GTPase HflX (426 aa).

In terms of domain architecture, Hflx-type G spans 198 to 365 (PTVSLVGYTN…ALTERLSGEV (168 aa)). Residues 204–211 (GYTNAGKS), 229–233 (FATLD), 251–254 (DTVG), 317–320 (NKID), and 343–345 (SAQ) contribute to the GTP site. The Mg(2+) site is built by Ser-211 and Thr-231.

It belongs to the TRAFAC class OBG-HflX-like GTPase superfamily. HflX GTPase family. As to quaternary structure, monomer. Associates with the 50S ribosomal subunit. This interaction occurs in the presence of GTP, GDP, ATP or ADP, but not in their absence. Mg(2+) is required as a cofactor.

It is found in the cytoplasm. Intrinsic GTPase activity is very slow and can be stimulated by the presence of 50S ribosomal subunits or 70S ribosomes. GTPase activity is inhibited by ATP. GTPase that associates with the 50S ribosomal subunit and may have a role during protein synthesis or ribosome biogenesis. In vitro, also exhibits ATPase activity. The polypeptide is GTPase HflX (Escherichia coli (strain K12)).